The sequence spans 119 residues: Large ribosomal subunit protein bL20 (119 aa).

It belongs to the bacterial ribosomal protein bL20 family.

Its function is as follows. Binds directly to 23S ribosomal RNA and is necessary for the in vitro assembly process of the 50S ribosomal subunit. It is not involved in the protein synthesizing functions of that subunit. The protein is Large ribosomal subunit protein bL20 of Alkaliphilus oremlandii (strain OhILAs) (Clostridium oremlandii (strain OhILAs)).